The primary structure comprises 511 residues: Maturase K (511 aa).

The protein belongs to the intron maturase 2 family. MatK subfamily.

The protein localises to the plastid. Usually encoded in the trnK tRNA gene intron. Probably assists in splicing its own and other chloroplast group II introns. The chain is Maturase K from Lathraea clandestina (Purple toothwort).